We begin with the raw amino-acid sequence, 2571 residues long: Stabilin-1 (2571 aa).

An N-terminal signal peptide occupies residues 1–25 (MAEPRTLLLLCVLVLCLSDSSFIRG). Topologically, residues 26-2475 (QTVRSKRCDI…RAVLGSEPPP (2450 aa)) are extracellular. EGF-like domains lie at 111–149 (FECPGGPATPCSGHGTCLDGIEGNGTCVCQGNFSGSVCQ), 157–194 (FGPDCQSVCNCVHGVCSHGPRGDGSCRCFAGYTGPHCD), 196–232 (ELPVCQSLKCPQNSQCSAEAPTCKCLPGYTQQDNVCL), and 233–272 (APDPCQPSACSPLARCSVTPQGQAQCQCPENYHGDGKVCL). 12 disulfides stabilise this stretch: C113/C127, C121/C137, C139/C148, C161/C172, C165/C182, C184/C193, C200/C211, C205/C218, C220/C231, C237/C248, C242/C258, and C260/C271. 2 N-linked (GlcNAc...) asparagine glycosylation sites follow: N134 and N142. 7 N-linked (GlcNAc...) asparagine glycosylation sites follow: N287, N313, N416, N607, N674, N713, and N746. FAS1 domains lie at 357 to 495 (YGHL…TALR) and 507 to 642 (KKTV…EGIL). Residues 729 to 769 (DCTQCPGGFSNPCYGKGNCSDGVRGNGACLCFPDYKGIACH) enclose the EGF-like 5 domain. 3 disulfides stabilise this stretch: C733–C747, C741–C757, and C759–C768. An N-linked (GlcNAc...) asparagine glycan is attached at N817. EGF-like domains are found at residues 819-859 (SMGN…NGFS), 862-904 (RSNP…RICV), 905-947 (AIDE…YECS), and 948-987 (PIDPCRVGNGGCHGLATCKAVGGGQRVCTCPPHFGGDGFS). 10 disulfide bridges follow: C823/C838, C832/C847, C866/C880, C874/C890, C892/C903, C909/C923, C917/C933, C935/C946, C952/C965, and C959/C975. 2 FAS1 domains span residues 989–1119 (YGDI…SQVL) and 1129–1254 (GPGL…SGIL). Residues N1011, N1088, N1097, N1171, N1179, N1223, and N1275 are each glycosylated (N-linked (GlcNAc...) asparagine). The Laminin EGF-like 1 domain maps to 1328–1393 (TLCEPCPGGL…CDCDHGLCQE (66 aa)). Disulfide bonds link C1333–C1347, C1341–C1357, C1359–C1368, C1380–C1391, C1384–C1401, C1403–C1412, C1421–C1431, C1425–C1441, C1443–C1454, C1460–C1473, C1467–C1483, C1485–C1496, C1502–C1515, C1509–C1525, C1527–C1539, C1545–C1558, C1552–C1568, and C1570–C1582. Residue N1398 is glycosylated (N-linked (GlcNAc...) asparagine). 4 EGF-like domains span residues 1417-1455 (TDHQCPKKCDPNANCIQDSAGIPACVCAAGYSGNGSYCS), 1456-1497 (EVDP…ELCQ), 1498-1540 (EINS…QTCK), and 1541-1583 (LLDP…ITCH). N-linked (GlcNAc...) asparagine glycosylation is found at N1450 and N1472. 2 FAS1 domains span residues 1583-1709 (HGRV…DHVL) and 1725-1865 (PQRN…DQLL). 2 N-linked (GlcNAc...) asparagine glycosylation sites follow: N1627 and N1728. Residues 1966–2031 (INCHACPGGP…RCTQHGRCDE (66 aa)) form the Laminin EGF-like 2 domain. 17 cysteine pairs are disulfide-bonded: C1971-C1985, C1979-C1995, C1997-C2006, C2018-C2029, C2023-C2039, C2041-C2050, C2060-C2070, C2064-C2076, C2078-C2089, C2095-C2108, C2102-C2117, C2119-C2130, C2136-C2150, C2144-C2160, C2162-C2173, C2230-C2299, and C2254-C2275. EGF-like domains lie at 2056 to 2090 (LQPVCTPPCAPQAVCRLGNSCECSLGYEGDGRVCT), 2091 to 2131 (VADL…WSCR), and 2132 to 2174 (ARDP…LQCL). N2107 carries N-linked (GlcNAc...) asparagine glycosylation. Residues 2208 to 2301 (GVFHIQATSG…SELWDAYCYR (94 aa)) form the Link domain. 8 N-linked (GlcNAc...) asparagine glycosylation sites follow: N2261, N2290, N2334, N2347, N2379, N2393, N2400, and N2424. Residues 2322 to 2459 (NGKLLDVLAA…GIIHALASPL (138 aa)) enclose the FAS1 7 domain. Residues 2476–2496 (VALSLGVVVTSGTLLGLVAGA) traverse the membrane as a helical segment. At 2497–2571 (LYLRARGKPP…PDTQRVLKVK (75 aa)) the chain is on the cytoplasmic side.

As to quaternary structure, interacts with CHID1.

The protein localises to the membrane. In terms of biological role, acts as a scavenger receptor for acetylated low density lipoprotein. Binds to both Gram-positive and Gram-negative bacteria and may play a role in defense against bacterial infection. When inhibited in endothelial tube formation assays, there is a marked decrease in cell-cell interactions, suggesting a role in angiogenesis. Involved in the delivery of newly synthesized CHID1/SI-CLP from the biosynthetic compartment to the endosomal/lysosomal system. The sequence is that of Stabilin-1 (Stab1) from Mus musculus (Mouse).